A 487-amino-acid chain; its full sequence is Transmembrane protein 161B (487 aa).

Asparagine 34 carries an N-linked (GlcNAc...) asparagine glycan. A helical membrane pass occupies residues 107 to 127 (LVDFTVAATIVYLVTEVYYSF). Residue asparagine 135 is glycosylated (N-linked (GlcNAc...) asparagine). A run of 2 helical transmembrane segments spans residues 136–156 (ISLV…FSLT) and 169–189 (SVCV…LIVT). N-linked (GlcNAc...) asparagine glycosylation occurs at asparagine 203. Helical transmembrane passes span 228-248 (FKFF…FPGL), 265-285 (ITQT…LLWV), 305-325 (LMTE…LCVL), 367-387 (VFYY…MLLH), and 459-479 (LSFL…FGLF).

The protein belongs to the TMEM161 family.

Its subcellular location is the cell membrane. In terms of biological role, essential for maintaining normal cardiac rhythm in the developing heart and for neonatal survival. Inhibits potassium and calcium currents in the cardiomyocytes, this assists in timely action potential repolarization and thereby maintains normal cardiac rhythm. In Mus musculus (Mouse), this protein is Transmembrane protein 161B (Tmem161b).